Here is a 90-residue protein sequence, read N- to C-terminus: Evasin P458 (90 aa).

The first 24 residues, 1–24 (MEVKTFAFLQIAVLIAFSLHSASA), serve as a signal peptide directing secretion. Cystine bridges form between cysteine 44–cysteine 63, cysteine 48–cysteine 65, and cysteine 59–cysteine 76. N-linked (GlcNAc...) asparagine glycosylation occurs at asparagine 47.

Its subcellular location is the secreted. Functionally, salivary chemokine-binding protein which binds to host chemokines CXCL1, CXCL2, CXCL3, CXCL5, CXCL6 and CXCL13. The polypeptide is Evasin P458 (Ixodes ricinus (Common tick)).